Reading from the N-terminus, the 118-residue chain is Hydrogenase maturation factor HypA (118 aa).

His-2 is a binding site for Ni(2+). Zn(2+) is bound by residues Cys-73, Cys-76, Cys-89, and Cys-92.

This sequence belongs to the HypA/HybF family.

Functionally, involved in the maturation of [NiFe] hydrogenases. Required for nickel insertion into the metal center of the hydrogenase. The polypeptide is Hydrogenase maturation factor HypA (Shewanella sp. (strain MR-7)).